The sequence spans 196 residues: Putative acetyltransferase YJL218W (196 aa).

An acetyl-CoA-binding site is contributed by Asn84. Catalysis depends on His114, which acts as the Proton donor/acceptor. Acetyl-CoA-binding positions include Gly141, Ala159, 164–165 (IR), Lys179, and Arg182.

This sequence belongs to the transferase hexapeptide repeat family. As to quaternary structure, homodimer.

This chain is Putative acetyltransferase YJL218W, found in Saccharomyces cerevisiae (strain ATCC 204508 / S288c) (Baker's yeast).